The following is a 190-amino-acid chain: Protein GrpE (190 aa).

The segment at 21–49 (DDLQEEVEATETEETVEEVIEETPEKSEL) is disordered. Residues 23-42 (LQEEVEATETEETVEEVIEE) are compositionally biased toward acidic residues.

The protein belongs to the GrpE family. Homodimer.

It localises to the cytoplasm. Participates actively in the response to hyperosmotic and heat shock by preventing the aggregation of stress-denatured proteins, in association with DnaK and GrpE. It is the nucleotide exchange factor for DnaK and may function as a thermosensor. Unfolded proteins bind initially to DnaJ; upon interaction with the DnaJ-bound protein, DnaK hydrolyzes its bound ATP, resulting in the formation of a stable complex. GrpE releases ADP from DnaK; ATP binding to DnaK triggers the release of the substrate protein, thus completing the reaction cycle. Several rounds of ATP-dependent interactions between DnaJ, DnaK and GrpE are required for fully efficient folding. This Streptococcus pyogenes serotype M3 (strain SSI-1) protein is Protein GrpE.